A 78-amino-acid chain; its full sequence is Large ribosomal subunit protein uL24 (78 aa).

The disordered stretch occupies residues 52–78 (PSEKTPNGGHVNKEMPIDISNVAKVEG).

This sequence belongs to the universal ribosomal protein uL24 family. As to quaternary structure, part of the 50S ribosomal subunit.

Its function is as follows. One of two assembly initiator proteins, it binds directly to the 5'-end of the 23S rRNA, where it nucleates assembly of the 50S subunit. In terms of biological role, one of the proteins that surrounds the polypeptide exit tunnel on the outside of the subunit. The polypeptide is Large ribosomal subunit protein uL24 (Campylobacter concisus (strain 13826)).